The chain runs to 98 residues: VQ motif-containing protein 1 (98 aa).

Positions 27 to 36 (FKTIVQELTG) match the VQ motif.

As to quaternary structure, interacts with WRKY33.

It localises to the nucleus. Functionally, may modulate WRKY transcription factor activities. The polypeptide is VQ motif-containing protein 1 (Arabidopsis thaliana (Mouse-ear cress)).